A 542-amino-acid polypeptide reads, in one-letter code: Bifunctional pantoate ligase/cytidylate kinase (542 aa).

The tract at residues 1–280 (MHWLRTVAAL…VGQTRLIDNL (280 aa)) is pantoate--beta-alanine ligase. 28-35 (MGSLHEGH) contacts ATP. His-35 (proton donor) is an active-site residue. Gln-59 lines the (R)-pantoate pocket. Position 59 (Gln-59) interacts with beta-alanine. 150–153 (GQKD) serves as a coordination point for ATP. Position 156 (Gln-156) interacts with (R)-pantoate. ATP-binding positions include Val-179 and 187 to 190 (CSSR). The cytidylate kinase stretch occupies residues 281–542 (LLSPEQGDPL…ERSGPARLDQ (262 aa)). A disordered region spans residues 287-311 (GDPLPERVQHAAPPSSGTTSPPRRP).

In the N-terminal section; belongs to the pantothenate synthetase family. It in the C-terminal section; belongs to the cytidylate kinase family. Type 1 subfamily.

Its subcellular location is the cytoplasm. The catalysed reaction is (R)-pantoate + beta-alanine + ATP = (R)-pantothenate + AMP + diphosphate + H(+). The enzyme catalyses CMP + ATP = CDP + ADP. It carries out the reaction dCMP + ATP = dCDP + ADP. Its pathway is cofactor biosynthesis; (R)-pantothenate biosynthesis; (R)-pantothenate from (R)-pantoate and beta-alanine: step 1/1. Its function is as follows. Catalyzes the condensation of pantoate with beta-alanine in an ATP-dependent reaction via a pantoyl-adenylate intermediate. In terms of biological role, catalyzes the transfer of a phosphate group from ATP to either CMP or dCMP to form CDP or dCDP and ADP, respectively. This chain is Bifunctional pantoate ligase/cytidylate kinase, found in Synechococcus sp. (strain JA-2-3B'a(2-13)) (Cyanobacteria bacterium Yellowstone B-Prime).